A 143-amino-acid chain; its full sequence is Nucleoside diphosphate kinase (143 aa).

Lys-11, Phe-59, Arg-87, Thr-93, Arg-104, and Asn-114 together coordinate ATP. The active-site Pros-phosphohistidine intermediate is His-117.

It belongs to the NDK family. Homotetramer. Mg(2+) serves as cofactor.

The protein localises to the cytoplasm. It carries out the reaction a 2'-deoxyribonucleoside 5'-diphosphate + ATP = a 2'-deoxyribonucleoside 5'-triphosphate + ADP. The enzyme catalyses a ribonucleoside 5'-diphosphate + ATP = a ribonucleoside 5'-triphosphate + ADP. In terms of biological role, major role in the synthesis of nucleoside triphosphates other than ATP. The ATP gamma phosphate is transferred to the NDP beta phosphate via a ping-pong mechanism, using a phosphorylated active-site intermediate. The polypeptide is Nucleoside diphosphate kinase (Shewanella oneidensis (strain ATCC 700550 / JCM 31522 / CIP 106686 / LMG 19005 / NCIMB 14063 / MR-1)).